Here is a 1303-residue protein sequence, read N- to C-terminus: Latent-transforming growth factor beta-binding protein 3 (1303 aa).

Residues 1 to 43 (MPGPRGAAGGLAPEMRGAGAAGLLALLLLLLLLLLGLGGRVEG) form the signal peptide. Asparagine 89 carries an N-linked (GlcNAc...) asparagine glycan. Residues 109–141 (RVVVCPLPCMNGGQCSSRNQCLCPPDFTGRFCQ) form the EGF-like 1 domain. 6 disulfides stabilise this stretch: cysteine 113-cysteine 123, cysteine 117-cysteine 129, cysteine 131-cysteine 140, cysteine 279-cysteine 303, cysteine 289-cysteine 316, and cysteine 304-cysteine 319. A disordered region spans residues 247–282 (SSNAESAAPSQHLLPHPKPSHPRPPTQKPLGRCFQD). Residues 277-331 (GRCFQDTLPKQPCGSNPLPGLTKQEDCCGSIGTAWGQSKCHKCPQLQYTGVQKPG) form the TB 1 domain. Asparagine 349 carries an N-linked (GlcNAc...) asparagine glycan. Residues 355-395 (DINECAMPGVCRHGDCLNNPGSYRCVCPPGHSLGPSRTQCI) form the EGF-like 2; calcium-binding domain. 7 cysteine pairs are disulfide-bonded: cysteine 359–cysteine 370, cysteine 365–cysteine 379, cysteine 381–cysteine 394, cysteine 405–cysteine 428, cysteine 415–cysteine 440, cysteine 429–cysteine 443, and cysteine 430–cysteine 455. One can recognise a TB 2 domain in the interval 403–455 (SLCFRLVSPEHQCQHPLTTRLTRQLCCCSVGKAWGARCQRCPTDGTAAFKEIC). The tract at residues 478-552 (FSLFLHPDGP…ISRPSPPTMR (75 aa)) is disordered. Residues 529-540 (PTATTTPARPYP) show a composition bias toward low complexity. The EGF-like 3 domain occupies 574 to 615 (ETDECRLNQNICGHGECVPGPPDYSCHCNPGYRSHPQHRYCV). Cystine bridges form between cysteine 578-cysteine 590, cysteine 585-cysteine 599, cysteine 601-cysteine 614, cysteine 620-cysteine 632, cysteine 625-cysteine 641, cysteine 664-cysteine 676, cysteine 670-cysteine 685, cysteine 687-cysteine 701, cysteine 748-cysteine 759, cysteine 754-cysteine 768, cysteine 770-cysteine 783, cysteine 789-cysteine 800, cysteine 795-cysteine 809, cysteine 811-cysteine 824, cysteine 830-cysteine 841, cysteine 836-cysteine 850, cysteine 852-cysteine 864, cysteine 870-cysteine 883, cysteine 877-cysteine 892, cysteine 894-cysteine 907, cysteine 919-cysteine 942, cysteine 929-cysteine 954, cysteine 943-cysteine 959, cysteine 944-cysteine 971, cysteine 997-cysteine 1010, cysteine 1005-cysteine 1019, cysteine 1021-cysteine 1034, cysteine 1040-cysteine 1051, cysteine 1046-cysteine 1060, cysteine 1062-cysteine 1075, cysteine 1086-cysteine 1097, cysteine 1092-cysteine 1106, cysteine 1108-cysteine 1121, cysteine 1138-cysteine 1162, cysteine 1148-cysteine 1174, cysteine 1163-cysteine 1177, and cysteine 1164-cysteine 1186. The region spanning 616-659 (DVNECEAEPCGPGRGICMNTGGSYNCHCNRGYRLHVGAGGRSCV) is the EGF-like 4; calcium-binding domain. In terms of domain architecture, EGF-like 5; calcium-binding spans 660–702 (DLNECAKPHLCGDGGFCINFPGHYKCNCYPGYRLKASRPPVCE). The 41-residue stretch at 744-784 (DVNECAEGSPCSPGWCENLPGSFRCTCAQGYAPAPDGRSCL) folds into the EGF-like 6; calcium-binding domain. Positions 785–825 (DVDECEAGDVCDNGICSNTPGSFQCQCLSGYHLSRDRSHCE) constitute an EGF-like 7; calcium-binding domain. One can recognise an EGF-like 8; calcium-binding domain in the interval 826–865 (DIDECDFPAACIGGDCINTNGSYRCLCPQGHRLVGGRKCQ). Asparagine 845 is a glycosylation site (N-linked (GlcNAc...) asparagine). The EGF-like 9; calcium-binding domain maps to 866 to 908 (DIDECSQDPSLCLPHGACKNLQGSYVCVCDEGFTPTQDQHGCE). The TB 3 domain maps to 917–971 (KECYLNFDDTVFCDSVLATNVTQQECCCSLGAGWGDHCEIYPCPVYSSAEFHSLC). A glycan (N-linked (GlcNAc...) asparagine) is linked at asparagine 936. The region spanning 993 to 1035 (DIDECMLFGSEICKEGKCVNTQPGYECYCKQGFYYDGNLLECV) is the EGF-like 10; calcium-binding domain. Residues 1036–1076 (DVDECLDESNCRNGVCENTRGGYRCACTPPAEYSPAQRQCL) enclose the EGF-like 11; calcium-binding domain. In terms of domain architecture, EGF-like 12; calcium-binding spans 1082-1122 (DVDECQDPAACRPGRCVNLPGSYRCECRPPWVPGPSGRDCQ). Residues 1136 to 1186 (DVCWSQRGEDGMCAGPLAGPALTFDDCCCRQGRGWGAQCRPCPPRGAGSHC) form the TB 4 domain. The segment covering 1188–1198 (TSQSESNSFWD) has biased composition (polar residues). Residues 1188–1219 (TSQSESNSFWDTSPLLLGKPPRDEDSSEEDSD) are disordered. Positions 1254 to 1298 (DIDECRELNQRGLLCKSERCVNTSGSFRCVCKAGFARSRPHGACV) constitute an EGF-like 13; calcium-binding domain. Cystine bridges form between cysteine 1258–cysteine 1273 and cysteine 1268–cysteine 1282. The N-linked (GlcNAc...) asparagine glycan is linked to asparagine 1275.

Belongs to the LTBP family. As to quaternary structure, forms part of the large latent transforming growth factor beta precursor complex; removal is essential for activation of complex. Interacts with EFEMP2. Contains hydroxylated asparagine residues. In terms of processing, two intrachain disulfide bonds from the TB3 domain are rearranged upon TGFB1 binding, and form interchain bonds with TGFB1 propeptide, anchoring it to the extracellular matrix. Isoform 2: Expressed prominently in heart, skeletal muscle, prostate, testis, small intestine and ovary. Isoform 1: Strongly expressed in pancreas and liver.

It localises to the secreted. Its subcellular location is the extracellular space. The protein localises to the extracellular matrix. Its function is as follows. Key regulator of transforming growth factor beta (TGFB1, TGFB2 and TGFB3) that controls TGF-beta activation by maintaining it in a latent state during storage in extracellular space. Associates specifically via disulfide bonds with the Latency-associated peptide (LAP), which is the regulatory chain of TGF-beta, and regulates integrin-dependent activation of TGF-beta. The protein is Latent-transforming growth factor beta-binding protein 3 (LTBP3) of Homo sapiens (Human).